The following is a 614-amino-acid chain: tRNA uridine 5-carboxymethylaminomethyl modification enzyme MnmG (614 aa).

10–15 (GAGHAG) serves as a coordination point for FAD. Residue 271–285 (GPRYCPSIEDKIVKF) participates in NAD(+) binding.

This sequence belongs to the MnmG family. Homodimer. Heterotetramer of two MnmE and two MnmG subunits. Requires FAD as cofactor.

It localises to the cytoplasm. In terms of biological role, NAD-binding protein involved in the addition of a carboxymethylaminomethyl (cmnm) group at the wobble position (U34) of certain tRNAs, forming tRNA-cmnm(5)s(2)U34. This Ureaplasma parvum serovar 3 (strain ATCC 27815 / 27 / NCTC 11736) protein is tRNA uridine 5-carboxymethylaminomethyl modification enzyme MnmG.